The following is a 211-amino-acid chain: Suppressor of RNA silencing p3 (211 aa).

Belongs to the tenuiviruses p3 protein family. As to quaternary structure, homodimer.

It localises to the host cytoplasm. In terms of biological role, acts as a suppressor of RNA-mediated gene silencing, also known as post-transcriptional gene silencing (PTGS), presumably through the binding of dsRNA. This Avena sativa (Oat) protein is Suppressor of RNA silencing p3.